The following is a 492-amino-acid chain: Protein nucleotidyltransferase YdiU (492 aa).

8 residues coordinate ATP: glycine 91, glycine 93, arginine 94, lysine 114, aspartate 126, glycine 127, arginine 180, and arginine 187. Aspartate 256 serves as the catalytic Proton acceptor. Residues asparagine 257 and aspartate 266 each contribute to the Mg(2+) site. Residue aspartate 266 coordinates ATP.

The protein belongs to the SELO family. Mg(2+) is required as a cofactor. Mn(2+) serves as cofactor.

It carries out the reaction L-seryl-[protein] + ATP = 3-O-(5'-adenylyl)-L-seryl-[protein] + diphosphate. The catalysed reaction is L-threonyl-[protein] + ATP = 3-O-(5'-adenylyl)-L-threonyl-[protein] + diphosphate. The enzyme catalyses L-tyrosyl-[protein] + ATP = O-(5'-adenylyl)-L-tyrosyl-[protein] + diphosphate. It catalyses the reaction L-histidyl-[protein] + UTP = N(tele)-(5'-uridylyl)-L-histidyl-[protein] + diphosphate. It carries out the reaction L-seryl-[protein] + UTP = O-(5'-uridylyl)-L-seryl-[protein] + diphosphate. The catalysed reaction is L-tyrosyl-[protein] + UTP = O-(5'-uridylyl)-L-tyrosyl-[protein] + diphosphate. Nucleotidyltransferase involved in the post-translational modification of proteins. It can catalyze the addition of adenosine monophosphate (AMP) or uridine monophosphate (UMP) to a protein, resulting in modifications known as AMPylation and UMPylation. The protein is Protein nucleotidyltransferase YdiU of Synechococcus sp. (strain ATCC 27144 / PCC 6301 / SAUG 1402/1) (Anacystis nidulans).